The sequence spans 235 residues: Glycerol-3-phosphate acyltransferase (235 aa).

Transmembrane regions (helical) follow at residues F2–I22, T56–F76, L94–G114, F126–L146, V152–F172, and F190–I210.

Belongs to the PlsY family. Probably interacts with PlsX.

It is found in the cell inner membrane. It carries out the reaction an acyl phosphate + sn-glycerol 3-phosphate = a 1-acyl-sn-glycero-3-phosphate + phosphate. It functions in the pathway lipid metabolism; phospholipid metabolism. Its function is as follows. Catalyzes the transfer of an acyl group from acyl-phosphate (acyl-PO(4)) to glycerol-3-phosphate (G3P) to form lysophosphatidic acid (LPA). This enzyme utilizes acyl-phosphate as fatty acyl donor, but not acyl-CoA or acyl-ACP. The chain is Glycerol-3-phosphate acyltransferase from Chlorobium phaeobacteroides (strain BS1).